Consider the following 131-residue polypeptide: Modulator protein MzrA (131 aa).

Residues M1 to K14 are Cytoplasmic-facing. Residues V15 to Q31 traverse the membrane as a helical segment. Over S32 to G131 the chain is Periplasmic.

It belongs to the MzrA family. In terms of assembly, interacts with EnvZ.

It localises to the cell inner membrane. Functionally, modulates the activity of the EnvZ/OmpR two-component regulatory system, probably by directly modulating EnvZ enzymatic activity and increasing stability of phosphorylated OmpR. The polypeptide is Modulator protein MzrA (Pectobacterium carotovorum subsp. carotovorum (strain PC1)).